An 86-amino-acid polypeptide reads, in one-letter code: Small ribosomal subunit protein bS16 (86 aa).

This sequence belongs to the bacterial ribosomal protein bS16 family.

This chain is Small ribosomal subunit protein bS16, found in Xylella fastidiosa (strain M23).